Here is a 134-residue protein sequence, read N- to C-terminus: Small ribosomal subunit protein uS8c (134 aa).

It belongs to the universal ribosomal protein uS8 family. In terms of assembly, part of the 30S ribosomal subunit.

The protein resides in the plastid. It localises to the chloroplast. Its function is as follows. One of the primary rRNA binding proteins, it binds directly to 16S rRNA central domain where it helps coordinate assembly of the platform of the 30S subunit. This is Small ribosomal subunit protein uS8c (rps8) from Aethionema grandiflorum (Persian stone-cress).